The primary structure comprises 797 residues: Probable exo-1,4-beta-xylosidase bxlB (797 aa).

An N-terminal signal peptide occupies residues 1 to 21 (MPLICIVYFLQYLDKIAISYA). N-linked (GlcNAc...) asparagine glycans are attached at residues asparagine 86 and asparagine 126. Aspartate 312 is an active-site residue. Residues asparagine 364, asparagine 431, asparagine 442, asparagine 483, asparagine 644, and asparagine 787 are each glycosylated (N-linked (GlcNAc...) asparagine).

It belongs to the glycosyl hydrolase 3 family.

The protein resides in the secreted. The catalysed reaction is Hydrolysis of (1-&gt;4)-beta-D-xylans, to remove successive D-xylose residues from the non-reducing termini.. Its pathway is glycan degradation; xylan degradation. Xylan 1,4-beta-xylosidase involved in the hydrolysis of xylan, a major structural heterogeneous polysaccharide found in plant biomass representing the second most abundant polysaccharide in the biosphere, after cellulose. This is Probable exo-1,4-beta-xylosidase bxlB (bxlB) from Aspergillus oryzae (strain ATCC 42149 / RIB 40) (Yellow koji mold).